The following is a 114-amino-acid chain: Protein vCCL3 (114 aa).

The signal sequence occupies residues 1–26 (MWSMCWVLRAHLGLLFWVAVIELCAA).

Acts as a highly selective agonist for human lymphoactin receptor XCR1. This chain is Protein vCCL3 (K4.1), found in Human herpesvirus 8 type P (isolate GK18) (HHV-8).